Consider the following 1300-residue polypeptide: DNA-directed RNA polymerase subunit beta (1300 aa).

Belongs to the RNA polymerase beta chain family. As to quaternary structure, the RNAP catalytic core consists of 2 alpha, 1 beta, 1 beta' and 1 omega subunit. When a sigma factor is associated with the core the holoenzyme is formed, which can initiate transcription.

The enzyme catalyses RNA(n) + a ribonucleoside 5'-triphosphate = RNA(n+1) + diphosphate. In terms of biological role, DNA-dependent RNA polymerase catalyzes the transcription of DNA into RNA using the four ribonucleoside triphosphates as substrates. In Chlorobium chlorochromatii (strain CaD3), this protein is DNA-directed RNA polymerase subunit beta.